The following is a 438-amino-acid chain: Xylose isomerase (438 aa).

Active-site residues include His-103 and Asp-106. Glu-234, Glu-270, His-273, Asp-298, Asp-309, Asp-311, and Asp-341 together coordinate Mg(2+).

Belongs to the xylose isomerase family. Homotetramer. Mg(2+) is required as a cofactor.

The protein resides in the cytoplasm. It catalyses the reaction alpha-D-xylose = alpha-D-xylulofuranose. The protein is Xylose isomerase of Bacteroides thetaiotaomicron (strain ATCC 29148 / DSM 2079 / JCM 5827 / CCUG 10774 / NCTC 10582 / VPI-5482 / E50).